Here is a 295-residue protein sequence, read N- to C-terminus: N-acetylmuramic acid 6-phosphate etherase (295 aa).

In terms of domain architecture, SIS spans 55–218 (AADALKQGGR…STGAMVKLGK (164 aa)). The Proton donor role is filled by E83. Residue E114 is part of the active site.

It belongs to the GCKR-like family. MurNAc-6-P etherase subfamily. In terms of assembly, homodimer.

The catalysed reaction is N-acetyl-D-muramate 6-phosphate + H2O = N-acetyl-D-glucosamine 6-phosphate + (R)-lactate. It participates in amino-sugar metabolism; 1,6-anhydro-N-acetylmuramate degradation. The protein operates within amino-sugar metabolism; N-acetylmuramate degradation. It functions in the pathway cell wall biogenesis; peptidoglycan recycling. In terms of biological role, specifically catalyzes the cleavage of the D-lactyl ether substituent of MurNAc 6-phosphate, producing GlcNAc 6-phosphate and D-lactate. Together with AnmK, is also required for the utilization of anhydro-N-acetylmuramic acid (anhMurNAc) either imported from the medium or derived from its own cell wall murein, and thus plays a role in cell wall recycling. The chain is N-acetylmuramic acid 6-phosphate etherase from Yersinia pseudotuberculosis serotype O:1b (strain IP 31758).